The following is a 207-amino-acid chain: Thiamine-phosphate synthase (207 aa).

Residues 37-41 (QYRHK) and Asn69 contribute to the 4-amino-2-methyl-5-(diphosphooxymethyl)pyrimidine site. Mg(2+) is bound by residues Asp70 and Asp89. 4-amino-2-methyl-5-(diphosphooxymethyl)pyrimidine is bound by residues Ser108 and Lys138. 2-[(2R,5Z)-2-carboxy-4-methylthiazol-5(2H)-ylidene]ethyl phosphate contacts are provided by residues Gly165 and 185-186 (IS).

The protein belongs to the thiamine-phosphate synthase family. Requires Mg(2+) as cofactor.

It carries out the reaction 2-[(2R,5Z)-2-carboxy-4-methylthiazol-5(2H)-ylidene]ethyl phosphate + 4-amino-2-methyl-5-(diphosphooxymethyl)pyrimidine + 2 H(+) = thiamine phosphate + CO2 + diphosphate. The enzyme catalyses 2-(2-carboxy-4-methylthiazol-5-yl)ethyl phosphate + 4-amino-2-methyl-5-(diphosphooxymethyl)pyrimidine + 2 H(+) = thiamine phosphate + CO2 + diphosphate. The catalysed reaction is 4-methyl-5-(2-phosphooxyethyl)-thiazole + 4-amino-2-methyl-5-(diphosphooxymethyl)pyrimidine + H(+) = thiamine phosphate + diphosphate. The protein operates within cofactor biosynthesis; thiamine diphosphate biosynthesis; thiamine phosphate from 4-amino-2-methyl-5-diphosphomethylpyrimidine and 4-methyl-5-(2-phosphoethyl)-thiazole: step 1/1. Functionally, condenses 4-methyl-5-(beta-hydroxyethyl)thiazole monophosphate (THZ-P) and 2-methyl-4-amino-5-hydroxymethyl pyrimidine pyrophosphate (HMP-PP) to form thiamine monophosphate (TMP). The chain is Thiamine-phosphate synthase from Janthinobacterium sp. (strain Marseille) (Minibacterium massiliensis).